The following is a 541-amino-acid chain: Glucose-6-phosphate isomerase (541 aa).

The Proton donor role is filled by E353. Active-site residues include H384 and K504.

It belongs to the GPI family.

The protein resides in the cytoplasm. The enzyme catalyses alpha-D-glucose 6-phosphate = beta-D-fructose 6-phosphate. It participates in carbohydrate biosynthesis; gluconeogenesis. It functions in the pathway carbohydrate degradation; glycolysis; D-glyceraldehyde 3-phosphate and glycerone phosphate from D-glucose: step 2/4. Catalyzes the reversible isomerization of glucose-6-phosphate to fructose-6-phosphate. The sequence is that of Glucose-6-phosphate isomerase from Deinococcus radiodurans (strain ATCC 13939 / DSM 20539 / JCM 16871 / CCUG 27074 / LMG 4051 / NBRC 15346 / NCIMB 9279 / VKM B-1422 / R1).